Here is a 171-residue protein sequence, read N- to C-terminus: Large ribosomal subunit protein bL9 (171 aa).

This sequence belongs to the bacterial ribosomal protein bL9 family.

Binds to the 23S rRNA. The polypeptide is Large ribosomal subunit protein bL9 (Rickettsia africae (strain ESF-5)).